Consider the following 431-residue polypeptide: MASNSILTLGPFKHRKDLTRESVLSTYQIIGYIAAGTYGKVYKAKLKNTASAEQLFAIKKFKSDNHSSNRSHHNHDINGNEIVHYTGISQSAIREMSLCRELNNKNITKLVDIILENKSIYMIFEFCEHDLLQIIHYHSHPEVKPIPQATVKSLIWQILNGVTFLHQNWIFHRDLKPANIMVSSSGVVKIGDLGLARKFNNPLQSLYTGDKVVVTIWYRAPELLLGARHYTPAIDLWAVGCILAELLSLRPIFKGEEAKIDINNKKSVPFQKNQFQKIVEVLGTPSMKNWPALNKYPEFISFQQQLTTNYPPNLVNWYKMIGSSNKQCLELLKGLLEYDPLVRLTADNALVHPYFLELPKVQENAFEGLNLKYPKRRIYTDDNDIISNQAINQNFKRHGGAYDDQHNNSNNNTNNSLNANNANNVPRKRAR.

Residues 27–355 (YQIIGYIAAG…ADNALVHPYF (329 aa)) enclose the Protein kinase domain. ATP is bound by residues 33-41 (IAAGTYGKV) and Lys59. Asp174 serves as the catalytic Proton acceptor. The segment at 397 to 431 (RHGGAYDDQHNNSNNNTNNSLNANNANNVPRKRAR) is disordered. Over residues 407-424 (NNSNNNTNNSLNANNANN) the composition is skewed to low complexity.

This sequence belongs to the protein kinase superfamily. CMGC Ser/Thr protein kinase family. CDC2/CDKX subfamily. Component of the srb8-11 complex, a regulatory module of the Mediator complex. Mg(2+) serves as cofactor.

Its subcellular location is the nucleus. It catalyses the reaction L-seryl-[protein] + ATP = O-phospho-L-seryl-[protein] + ADP + H(+). The catalysed reaction is L-threonyl-[protein] + ATP = O-phospho-L-threonyl-[protein] + ADP + H(+). It carries out the reaction [DNA-directed RNA polymerase] + ATP = phospho-[DNA-directed RNA polymerase] + ADP + H(+). Functionally, component of the srb8-11 complex. The srb8-11 complex is a regulatory module of the Mediator complex which is itself dependent transcription. The srb8-11 complex may be involved in the transcriptional repression of a subset of genes regulated by Mediator. It may inhibit the association of the Mediator complex with RNA polymerase II to form the holoenzyme complex. The srb8-11 complex phosphorylates the C-terminal domain (CTD) of the largest subunit of RNA polymerase II. In Scheffersomyces stipitis (strain ATCC 58785 / CBS 6054 / NBRC 10063 / NRRL Y-11545) (Yeast), this protein is Serine/threonine-protein kinase SSN3 (SSN3).